The sequence spans 397 residues: Lysophospholipid transporter LplT (397 aa).

Residues Met-1–Lys-17 are Periplasmic-facing. The chain crosses the membrane as a helical span at residues Ala-18–Leu-38. The Cytoplasmic portion of the chain corresponds to Ala-39–Pro-52. The helical transmembrane segment at Ile-53–Ala-73 threads the bilayer. Over Asp-74 to Leu-90 the chain is Periplasmic. A helical transmembrane segment spans residues Leu-91–Val-111. Residues Gly-112–Thr-144 are Cytoplasmic-facing. The helical transmembrane segment at Ile-145–Val-165 threads the bilayer. Residue Ala-166 is a topological domain, periplasmic. The chain crosses the membrane as a helical span at residues Leu-167–Leu-187. The Cytoplasmic segment spans residues Ala-188–Ser-226. The chain crosses the membrane as a helical span at residues Leu-227–Leu-247. Over Gly-248–Thr-256 the chain is Periplasmic. The chain crosses the membrane as a helical span at residues Tyr-257–Val-277. Residues Thr-278–Glu-280 are Cytoplasmic-facing. Residues Thr-281–Leu-301 traverse the membrane as a helical segment. Topologically, residues Gln-302–Glu-304 are periplasmic. Residues Leu-305–Pro-325 form a helical membrane-spanning segment. Over Leu-326–Ala-343 the chain is Cytoplasmic. Residues Ile-344 to Leu-364 traverse the membrane as a helical segment. At Ala-365–Val-366 the chain is on the periplasmic side. Residues Met-367–Ile-387 traverse the membrane as a helical segment. The Cytoplasmic segment spans residues Thr-388 to Tyr-397.

Belongs to the major facilitator superfamily. LplT (TC 2.A.1.42) family.

The protein resides in the cell inner membrane. In terms of biological role, catalyzes the facilitated diffusion of 2-acyl-glycero-3-phosphoethanolamine (2-acyl-GPE) into the cell. This chain is Lysophospholipid transporter LplT, found in Escherichia coli O127:H6 (strain E2348/69 / EPEC).